Consider the following 619-residue polypeptide: Dihydroxy-acid dehydratase (619 aa).

Asp-81 contacts Mg(2+). Cys-122 contacts [2Fe-2S] cluster. Positions 123 and 124 each coordinate Mg(2+). Lys-124 is modified (N6-carboxylysine). Cys-198 contacts [2Fe-2S] cluster. Glu-494 lines the Mg(2+) pocket. The Proton acceptor role is filled by Ser-520.

This sequence belongs to the IlvD/Edd family. Homodimer. Requires [2Fe-2S] cluster as cofactor. It depends on Mg(2+) as a cofactor.

It catalyses the reaction (2R)-2,3-dihydroxy-3-methylbutanoate = 3-methyl-2-oxobutanoate + H2O. The catalysed reaction is (2R,3R)-2,3-dihydroxy-3-methylpentanoate = (S)-3-methyl-2-oxopentanoate + H2O. It functions in the pathway amino-acid biosynthesis; L-isoleucine biosynthesis; L-isoleucine from 2-oxobutanoate: step 3/4. It participates in amino-acid biosynthesis; L-valine biosynthesis; L-valine from pyruvate: step 3/4. Functions in the biosynthesis of branched-chain amino acids. Catalyzes the dehydration of (2R,3R)-2,3-dihydroxy-3-methylpentanoate (2,3-dihydroxy-3-methylvalerate) into 2-oxo-3-methylpentanoate (2-oxo-3-methylvalerate) and of (2R)-2,3-dihydroxy-3-methylbutanoate (2,3-dihydroxyisovalerate) into 2-oxo-3-methylbutanoate (2-oxoisovalerate), the penultimate precursor to L-isoleucine and L-valine, respectively. The chain is Dihydroxy-acid dehydratase from Neisseria meningitidis serogroup C / serotype 2a (strain ATCC 700532 / DSM 15464 / FAM18).